Consider the following 523-residue polypeptide: Putative L-type lectin-domain containing receptor kinase V.6 (523 aa).

An N-terminal signal peptide occupies residues 1–27 (MFSEVKVLQIVLVQWLTLFSFTYNSHG). Positions 28–242 (TYILDGSAVF…TGSIRALHYM (215 aa)) are legume-lectin like. Topologically, residues 28 to 279 (TYILDGSAVF…KPSDRLRTVL (252 aa)) are extracellular. Residues N47, N59, N112, and N171 are each glycosylated (N-linked (GlcNAc...) asparagine). Residues 280 to 300 (AVCLTLALFAVFLASGIGFVF) form a helical membrane-spanning segment. At 301–523 (YLRHKKVKEV…TGRAVRVKFF (223 aa)) the chain is on the cytoplasmic side. In terms of domain architecture, Protein kinase spans 335–523 (FKEKQLLGKG…TGRAVRVKFF (189 aa)). ATP contacts are provided by residues 341–349 (LGKGGFGQV) and K364. Residue D464 is the Proton acceptor of the active site.

This sequence in the C-terminal section; belongs to the protein kinase superfamily. Ser/Thr protein kinase family. It in the N-terminal section; belongs to the leguminous lectin family.

The protein resides in the cell membrane. It catalyses the reaction L-seryl-[protein] + ATP = O-phospho-L-seryl-[protein] + ADP + H(+). It carries out the reaction L-threonyl-[protein] + ATP = O-phospho-L-threonyl-[protein] + ADP + H(+). The sequence is that of Putative L-type lectin-domain containing receptor kinase V.6 (LECRK56) from Arabidopsis thaliana (Mouse-ear cress).